A 314-amino-acid polypeptide reads, in one-letter code: Olfactory receptor 2Z1 (314 aa).

Over 1-25 (MGDVNQSVASDFILVGLFSHSGSRQ) the chain is Extracellular. N5 is a glycosylation site (N-linked (GlcNAc...) asparagine). Residues 26–49 (LLFSLVAVMFVIGLLGNTVLLFLI) form a helical membrane-spanning segment. Over 50–57 (RVDSRLHT) the chain is Cytoplasmic. Residues 58-79 (PMYFLLSQLSLFDIGCPMVTIP) traverse the membrane as a helical segment. Residues 80–100 (KMASDFLRGEGATSYGGGAAQ) are Extracellular-facing. The helical transmembrane segment at 101 to 120 (IFFLTLMGVAEGVLLVLMSY) threads the bilayer. Residues 121 to 139 (DRYVAVCQPLQYPVLMRRQ) lie on the Cytoplasmic side of the membrane. The helical transmembrane segment at 140–158 (VCLLMMGSSWVVGVLNASI) threads the bilayer. The Extracellular segment spans residues 159 to 195 (QTSITLHFPYCASRIVDHFFCEVPALLKLSCADTCAY). The helical transmembrane segment at 196-219 (EMALSTSGVLILMLPLSLIATSYG) threads the bilayer. Over 220–236 (HVLQAVLSMRSEEARHK) the chain is Cytoplasmic. A helical membrane pass occupies residues 237–259 (AVTTCSSHITVVGLFYGAAVFMY). Residues 260–272 (MVPCAYHSPQQDN) lie on the Extracellular side of the membrane. A helical transmembrane segment spans residues 273 to 292 (VVSLFYSLVTPTLNPLIYSL). At 293-314 (RNPEVWMALVKVLSRAGLRQMC) the chain is on the cytoplasmic side.

This sequence belongs to the G-protein coupled receptor 1 family.

It localises to the cell membrane. Its function is as follows. Odorant receptor. The sequence is that of Olfactory receptor 2Z1 (OR2Z1) from Homo sapiens (Human).